Reading from the N-terminus, the 386-residue chain is O-methyltransferase 10 (386 aa).

5 residues coordinate S-adenosyl-L-homocysteine: serine 207, glycine 231, aspartate 254, aspartate 274, and lysine 288. S-adenosyl-L-methionine is bound at residue aspartate 254. Residue histidine 292 is the Proton acceptor of the active site.

This sequence belongs to the class I-like SAM-binding methyltransferase superfamily. Cation-independent O-methyltransferase family. In terms of assembly, homodimer.

It catalyses the reaction dopamine + S-adenosyl-L-methionine = 4-methoxytyramine + S-adenosyl-L-homocysteine + H(+). It carries out the reaction 3,4-dihydroxy-5-methoxyphenethylamine + S-adenosyl-L-methionine = 3-hydroxy-4,5-dimethoxyphenethylamine + S-adenosyl-L-homocysteine + H(+). The enzyme catalyses 3-hydroxy-4,5-dimethoxyphenethylamine + S-adenosyl-L-methionine = mescaline + S-adenosyl-L-homocysteine + H(+). The catalysed reaction is 4-hydroxy-3,5-dimethoxyphenethylamine + S-adenosyl-L-methionine = mescaline + S-adenosyl-L-homocysteine + H(+). The protein operates within aromatic compound metabolism. Its pathway is alkaloid biosynthesis. Functionally, O-methyltransferase participating in the biosynthesis of natural products derived from phenylethylamine, including mescaline, a natural hallucinogen potentially used in psychotherapeutic treatments. Catalyzes the O-methylation of mescaline para hydroxyl groups, using dopamine, 3,4-dihydroxy-5-methoxyphenethylamine, 3-hydroxy-4,5-dimethoxyphenethylamine and 4-hydroxy-3,5-dimethoxyphenethylamine as substrates. This Lophophora williamsii (Peyote) protein is O-methyltransferase 10.